A 307-amino-acid polypeptide reads, in one-letter code: Ornithine carbamoyltransferase (307 aa).

Carbamoyl phosphate contacts are provided by residues 56–59 (STRT), Gln-83, Arg-107, and 134–137 (HPCQ). Residues Asn-165, Asp-223, and 227–228 (SM) contribute to the L-ornithine site. Carbamoyl phosphate-binding positions include 263 to 264 (CL) and Arg-291.

Belongs to the aspartate/ornithine carbamoyltransferase superfamily. OTCase family.

Its subcellular location is the cytoplasm. The catalysed reaction is carbamoyl phosphate + L-ornithine = L-citrulline + phosphate + H(+). It functions in the pathway amino-acid biosynthesis; L-arginine biosynthesis; L-arginine from L-ornithine and carbamoyl phosphate: step 1/3. Its function is as follows. Reversibly catalyzes the transfer of the carbamoyl group from carbamoyl phosphate (CP) to the N(epsilon) atom of ornithine (ORN) to produce L-citrulline. The chain is Ornithine carbamoyltransferase from Cupriavidus pinatubonensis (strain JMP 134 / LMG 1197) (Cupriavidus necator (strain JMP 134)).